The following is a 296-amino-acid chain: ATP synthase gamma chain (296 aa).

The protein belongs to the ATPase gamma chain family. In terms of assembly, F-type ATPases have 2 components, CF(1) - the catalytic core - and CF(0) - the membrane proton channel. CF(1) has five subunits: alpha(3), beta(3), gamma(1), delta(1), epsilon(1). CF(0) has three main subunits: a, b and c.

It is found in the cell inner membrane. Produces ATP from ADP in the presence of a proton gradient across the membrane. The gamma chain is believed to be important in regulating ATPase activity and the flow of protons through the CF(0) complex. This Jannaschia sp. (strain CCS1) protein is ATP synthase gamma chain.